We begin with the raw amino-acid sequence, 149 residues long: MAKKITGYVKLQVPAGSANPAPPIGPALGQRGLNIMEFCKAFNAQTAQLEKGMPIPVVITAYQDRSFTFELKTPPVSYFLKKAAGLETKKKPGSGSKTPGKGTFVGKVTRAQLSEIAEKKMKDLNCETVEAAVQMIEGSARSMGLQVQG.

The protein belongs to the universal ribosomal protein uL11 family. Part of the ribosomal stalk of the 50S ribosomal subunit. Interacts with L10 and the large rRNA to form the base of the stalk. L10 forms an elongated spine to which L12 dimers bind in a sequential fashion forming a multimeric L10(L12)X complex. One or more lysine residues are methylated.

In terms of biological role, forms part of the ribosomal stalk which helps the ribosome interact with GTP-bound translation factors. In Xanthobacter autotrophicus (strain ATCC BAA-1158 / Py2), this protein is Large ribosomal subunit protein uL11.